The primary structure comprises 119 residues: Large ribosomal subunit protein uL14 (119 aa).

It belongs to the universal ribosomal protein uL14 family. As to quaternary structure, part of the 50S ribosomal subunit. Forms a cluster with proteins L3 and L19. In the 70S ribosome, L14 and L19 interact and together make contacts with the 16S rRNA in bridges B5 and B8.

In terms of biological role, binds to 23S rRNA. Forms part of two intersubunit bridges in the 70S ribosome. This Ehrlichia canis (strain Jake) protein is Large ribosomal subunit protein uL14.